Consider the following 964-residue polypeptide: Glycine dehydrogenase (decarboxylating) (964 aa).

A compositionally biased stretch (polar residues) spans 1-11 (MNSTLQNQTKT). A disordered region spans residues 1–21 (MNSTLQNQTKTNLEKVGTDPL). The residue at position 713 (lysine 713) is an N6-(pyridoxal phosphate)lysine.

It belongs to the GcvP family. The glycine cleavage system is composed of four proteins: P, T, L and H. Pyridoxal 5'-phosphate is required as a cofactor.

The catalysed reaction is N(6)-[(R)-lipoyl]-L-lysyl-[glycine-cleavage complex H protein] + glycine + H(+) = N(6)-[(R)-S(8)-aminomethyldihydrolipoyl]-L-lysyl-[glycine-cleavage complex H protein] + CO2. In terms of biological role, the glycine cleavage system catalyzes the degradation of glycine. The P protein binds the alpha-amino group of glycine through its pyridoxal phosphate cofactor; CO(2) is released and the remaining methylamine moiety is then transferred to the lipoamide cofactor of the H protein. The polypeptide is Glycine dehydrogenase (decarboxylating) (Leptospira interrogans serogroup Icterohaemorrhagiae serovar copenhageni (strain Fiocruz L1-130)).